The sequence spans 361 residues: 3-dehydroquinate synthase (361 aa).

NAD(+) is bound by residues 71–76, 105–109, 129–130, Lys142, and Lys151; these read DGEQYK, GVIGD, and TT. Residues Glu184, His247, and His264 each coordinate Zn(2+).

This sequence belongs to the sugar phosphate cyclases superfamily. Dehydroquinate synthase family. The cofactor is Co(2+). It depends on Zn(2+) as a cofactor. NAD(+) serves as cofactor.

Its subcellular location is the cytoplasm. It catalyses the reaction 7-phospho-2-dehydro-3-deoxy-D-arabino-heptonate = 3-dehydroquinate + phosphate. The protein operates within metabolic intermediate biosynthesis; chorismate biosynthesis; chorismate from D-erythrose 4-phosphate and phosphoenolpyruvate: step 2/7. Catalyzes the conversion of 3-deoxy-D-arabino-heptulosonate 7-phosphate (DAHP) to dehydroquinate (DHQ). The protein is 3-dehydroquinate synthase of Pectobacterium atrosepticum (strain SCRI 1043 / ATCC BAA-672) (Erwinia carotovora subsp. atroseptica).